Here is a 635-residue protein sequence, read N- to C-terminus: Membrane protein insertase YidC (635 aa).

Residues 8–28 traverse the membrane as a helical segment; that stretch reads LILAMVLSALVMLVWSIFFAP. Residues 33–61 form a disordered region; the sequence is PAQDTPAASTQGTAQPEAGGPATPGAVPQ. 4 consecutive transmembrane segments (helical) span residues 396 to 416, 470 to 490, 528 to 548, and 564 to 584; these read MIGN…LLVF, LPVL…FVTI, SFLH…SMWM, and IFAW…SGLV. The disordered stretch occupies residues 615 to 635; it reads IRSSLPSRAKAGDKGGDKGGK. The segment covering 624–635 has biased composition (basic and acidic residues); it reads KAGDKGGDKGGK.

The protein belongs to the OXA1/ALB3/YidC family. Type 1 subfamily. Interacts with the Sec translocase complex via SecD. Specifically interacts with transmembrane segments of nascent integral membrane proteins during membrane integration.

It is found in the cell inner membrane. In terms of biological role, required for the insertion and/or proper folding and/or complex formation of integral membrane proteins into the membrane. Involved in integration of membrane proteins that insert both dependently and independently of the Sec translocase complex, as well as at least some lipoproteins. Aids folding of multispanning membrane proteins. This Paracoccus denitrificans (strain Pd 1222) protein is Membrane protein insertase YidC.